A 277-amino-acid polypeptide reads, in one-letter code: Insulin-induced gene 1 protein (277 aa).

The Cytoplasmic portion of the chain corresponds to 1–84 (MPRLHDHFWS…PYPNTWHHRL (84 aa)). A compositionally biased stretch (low complexity) spans 51–66 (HGAPDADPAPRGRSAA). A disordered region spans residues 51 to 73 (HGAPDADPAPRGRSAAMSGPEPG). The chain crosses the membrane as a helical span at residues 85–107 (LQRSLVLFSVGVVLALVLNLLQI). Topologically, residues 108–126 (QRNVTLFPEEVIATIFSSA) are lumenal. A helical transmembrane segment spans residues 127-144 (WWVPPCCGTAAAVVGLLY). Residues 145–159 (PCIDSHLGEPHKFKR) are Cytoplasmic-facing. Glycyl lysine isopeptide (Lys-Gly) (interchain with G-Cter in ubiquitin) cross-links involve residues lysine 156 and lysine 158. A helical membrane pass occupies residues 160-182 (EWASVMRCIAVFVGINHASAKLD). Residues 183–185 (FAN) lie on the Lumenal side of the membrane. Residues 186–204 (NVQLSLTLAALSLGLWWTF) form a helical membrane-spanning segment. The Cytoplasmic portion of the chain corresponds to 205–209 (DRSRS). Serine 207 carries the post-translational modification Phosphoserine; by PCK1. The chain crosses the membrane as a helical span at residues 210-231 (GLGLGITIAFLATLITQFLVYN). The Lumenal portion of the chain corresponds to 232 to 245 (GVYQYTSPDFLYIR). A helical transmembrane segment spans residues 246 to 263 (SWLPCIFFSGGVTVGNIG). Residues 264 to 277 (RQLAMGVPEKPHSD) are Cytoplasmic-facing. Residues 271 to 277 (PEKPHSD) carry the KxHxx motif.

It belongs to the INSIG family. Interacts with SCAP; interaction is direct and only takes place in the presence of sterols; it prevents interaction between SCAP and the coat protein complex II (COPII). Associates with the SCAP-SREBP complex (composed of SCAP and SREBF1/SREBP1 or SREBF2/SREBP2); association is mediated via its interaction with SCAP and only takes place in the presence of sterols. Interaction with SCAP is mutually exclusive with PAQR3. Interacts with HMGCR (via its SSD); the interaction, accelerated by sterols, leads to the recruitment of HMGCR to AMFR/gp78 for its ubiquitination by the sterol-mediated ERAD pathway. Interacts with AMFR/gp78 (via its membrane domain); the interaction recruits HMCR at the ER membrane for its ubiquitination and degradation by the sterol-mediated ERAD pathway. Interacts with SOAT2/ACAT2; leading to promote recruitment of AMFR/gp78 and subsequent ubiquitination of SOAT2/ACAT2. Interacts with RNF139. Interacts with RNF145. Phosphorylation at Ser-207 by PCK1 reduces binding to oxysterol, disrupting the interaction between INSIG1 and SCAP, thereby promoting nuclear translocation of SREBP proteins (SREBF1/SREBP1 or SREBF2/SREBP2) and subsequent transcription of downstream lipogenesis-related genes. In terms of processing, ubiquitinated by AMFR/gp78 in response to sterol deprivation, leading to its degradation: when the SCAP-SREBP complex becomes dissociated from INSIG1, INSIG1 is then ubiquitinated and degraded in proteasomes. Although ubiquitination is required for rapid INSIG1 degradation, it is not required for release of the SCAP-SREBP complex. Ubiquitinated by RNF139. As to expression, expressed in all tissues tested with highest expression in the liver.

Its subcellular location is the endoplasmic reticulum membrane. Its function is as follows. Oxysterol-binding protein that mediates feedback control of cholesterol synthesis by controlling both endoplasmic reticulum to Golgi transport of SCAP and degradation of HMGCR. Acts as a negative regulator of cholesterol biosynthesis by mediating the retention of the SCAP-SREBP complex in the endoplasmic reticulum, thereby blocking the processing of sterol regulatory element-binding proteins (SREBPs) SREBF1/SREBP1 and SREBF2/SREBP2. Binds oxysterol, including 25-hydroxycholesterol, regulating interaction with SCAP and retention of the SCAP-SREBP complex in the endoplasmic reticulum. In presence of oxysterol, interacts with SCAP, retaining the SCAP-SREBP complex in the endoplasmic reticulum, thereby preventing SCAP from escorting SREBF1/SREBP1 and SREBF2/SREBP2 to the Golgi. Sterol deprivation or phosphorylation by PCK1 reduce oxysterol-binding, disrupting the interaction between INSIG1 and SCAP, thereby promoting Golgi transport of the SCAP-SREBP complex, followed by processing and nuclear translocation of SREBF1/SREBP1 and SREBF2/SREBP2. Also regulates cholesterol synthesis by regulating degradation of HMGCR: initiates the sterol-mediated ubiquitin-mediated endoplasmic reticulum-associated degradation (ERAD) of HMGCR via recruitment of the reductase to the ubiquitin ligases AMFR/gp78 and/or RNF139. Also regulates degradation of SOAT2/ACAT2 when the lipid levels are low: initiates the ubiquitin-mediated degradation of SOAT2/ACAT2 via recruitment of the ubiquitin ligases AMFR/gp78. The chain is Insulin-induced gene 1 protein from Homo sapiens (Human).